A 393-amino-acid polypeptide reads, in one-letter code: S-adenosylmethionine synthase (393 aa).

ATP is bound at residue His-16. Mg(2+) is bound at residue Asp-18. Glu-44 is a K(+) binding site. L-methionine contacts are provided by Glu-57 and Gln-100. The tract at residues 100–110 (QSNDIAQGVDH) is flexible loop. ATP-binding positions include 167–169 (DAK), 238–239 (RF), Asp-247, 253–254 (RK), Ala-270, and Lys-274. Asp-247 contributes to the L-methionine binding site. Residue Lys-278 coordinates L-methionine.

Belongs to the AdoMet synthase family. As to quaternary structure, homotetramer; dimer of dimers. It depends on Mg(2+) as a cofactor. K(+) serves as cofactor.

It is found in the cytoplasm. It carries out the reaction L-methionine + ATP + H2O = S-adenosyl-L-methionine + phosphate + diphosphate. It functions in the pathway amino-acid biosynthesis; S-adenosyl-L-methionine biosynthesis; S-adenosyl-L-methionine from L-methionine: step 1/1. In terms of biological role, catalyzes the formation of S-adenosylmethionine (AdoMet) from methionine and ATP. The overall synthetic reaction is composed of two sequential steps, AdoMet formation and the subsequent tripolyphosphate hydrolysis which occurs prior to release of AdoMet from the enzyme. In Paracidovorax citrulli (strain AAC00-1) (Acidovorax citrulli), this protein is S-adenosylmethionine synthase.